The chain runs to 287 residues: Acetylglutamate kinase (287 aa).

Residues 70-71 (GG), R92, and N184 each bind substrate.

The protein belongs to the acetylglutamate kinase family. ArgB subfamily.

It localises to the cytoplasm. The enzyme catalyses N-acetyl-L-glutamate + ATP = N-acetyl-L-glutamyl 5-phosphate + ADP. It functions in the pathway amino-acid biosynthesis; L-arginine biosynthesis; N(2)-acetyl-L-ornithine from L-glutamate: step 2/4. Catalyzes the ATP-dependent phosphorylation of N-acetyl-L-glutamate. This is Acetylglutamate kinase from Dinoroseobacter shibae (strain DSM 16493 / NCIMB 14021 / DFL 12).